A 103-amino-acid chain; its full sequence is MYAVIKSGGKQHRVNVDELLKVELLKAEKGETIKIEDVLMVVDGDDYKIGQPVVEGASVEAEVVEHGRGKKIRIVKHKRRKHYHKEQGHRQWYTLLKIKAINV.

It belongs to the bacterial ribosomal protein bL21 family. In terms of assembly, part of the 50S ribosomal subunit. Contacts protein L20.

Functionally, this protein binds to 23S rRNA in the presence of protein L20. This is Large ribosomal subunit protein bL21 from Psychrobacter sp. (strain PRwf-1).